The following is a 180-amino-acid chain: D-lyxose ketol-isomerase (180 aa).

Lys-62 contacts D-fructose. Mn(2+) contacts are provided by His-75 and His-77. Lys-86 contributes to the D-fructose binding site. Mn(2+)-binding residues include Glu-88 and His-143. Positions 156, 166, and 175 each coordinate D-fructose.

This sequence belongs to the D-lyxose ketol-isomerase family. Homodimer; disulfide-linked. Stabilized by a disulfide bond between the two monomers of the dimeric enzyme and increased hydrophobicity at the dimer interface. Mn(2+) is required as a cofactor.

It catalyses the reaction D-lyxose = D-xylulose. Its function is as follows. Sugar isomerase that catalyzes the reversible isomerization of D-lyxose to D-xylulose. Is highly specific for the substrate D-lyxose, showing less than 2% activity towards mannose and other substrates reported for lyxose isomerases. The protein is D-lyxose ketol-isomerase of Thermofilum sp. (strain ex4484_79).